Here is a 510-residue protein sequence, read N- to C-terminus: NAD(P)H-quinone oxidoreductase subunit 2 A, chloroplastic (510 aa).

13 consecutive transmembrane segments (helical) span residues 24–44, 57–77, 99–119, 124–144, 149–169, 183–203, 227–247, 295–315, 323–343, 354–374, 395–415, 418–438, and 484–504; these read LLLFDGSLIFPECILIFGLIL, IPWLYFISSTSLVMSITALLF, IFQFLILLCSTLCIPLSVEYI, MAITEFLLFILTATLGGMFLC, LITIFVAPECFSLCSYLLSGY, YLLMGGASSSILVHGFSWLYG, PGISIALIFITVGIGFKLSPA, WHLLLEILAILSMILGNLIAI, MLAYSSIGQIGYVIIGIIVGD, YMLFYISMNLGTFACIVSFGL, ALSLALCLLSLGGLPPLAGFF, LHLFWCGWQAGLYFLVSIGLL, and MIVCVIASTIPGISMNPIIAI.

This sequence belongs to the complex I subunit 2 family. In terms of assembly, NDH is composed of at least 16 different subunits, 5 of which are encoded in the nucleus.

It is found in the plastid. The protein localises to the chloroplast thylakoid membrane. The catalysed reaction is a plastoquinone + NADH + (n+1) H(+)(in) = a plastoquinol + NAD(+) + n H(+)(out). The enzyme catalyses a plastoquinone + NADPH + (n+1) H(+)(in) = a plastoquinol + NADP(+) + n H(+)(out). NDH shuttles electrons from NAD(P)H:plastoquinone, via FMN and iron-sulfur (Fe-S) centers, to quinones in the photosynthetic chain and possibly in a chloroplast respiratory chain. The immediate electron acceptor for the enzyme in this species is believed to be plastoquinone. Couples the redox reaction to proton translocation, and thus conserves the redox energy in a proton gradient. This chain is NAD(P)H-quinone oxidoreductase subunit 2 A, chloroplastic, found in Carica papaya (Papaya).